A 332-amino-acid polypeptide reads, in one-letter code: Aspartate carbamoyltransferase catalytic subunit (332 aa).

Carbamoyl phosphate contacts are provided by R78 and T79. K106 contributes to the L-aspartate binding site. Positions 128, 156, and 159 each coordinate carbamoyl phosphate. Residues R189 and R243 each coordinate L-aspartate. Residues G284 and P285 each contribute to the carbamoyl phosphate site.

The protein belongs to the aspartate/ornithine carbamoyltransferase superfamily. ATCase family. Heterododecamer (2C3:3R2) of six catalytic PyrB chains organized as two trimers (C3), and six regulatory PyrI chains organized as three dimers (R2).

The enzyme catalyses carbamoyl phosphate + L-aspartate = N-carbamoyl-L-aspartate + phosphate + H(+). It functions in the pathway pyrimidine metabolism; UMP biosynthesis via de novo pathway; (S)-dihydroorotate from bicarbonate: step 2/3. In terms of biological role, catalyzes the condensation of carbamoyl phosphate and aspartate to form carbamoyl aspartate and inorganic phosphate, the committed step in the de novo pyrimidine nucleotide biosynthesis pathway. This chain is Aspartate carbamoyltransferase catalytic subunit, found in Caulobacter vibrioides (strain ATCC 19089 / CIP 103742 / CB 15) (Caulobacter crescentus).